Consider the following 80-residue polypeptide: uncharacterized protein (80 aa).

It belongs to the BolA/IbaG family.

This is an uncharacterized protein from Buchnera aphidicola subsp. Schizaphis graminum (strain Sg).